The primary structure comprises 340 residues: Methionine import ATP-binding protein MetN (340 aa).

Positions 5–243 (IEFRGVTKSF…PQTTTARRFV (239 aa)) constitute an ABC transporter domain. 40-47 (GYSGAGKS) contributes to the ATP binding site.

The protein belongs to the ABC transporter superfamily. Methionine importer (TC 3.A.1.24) family. As to quaternary structure, the complex is composed of two ATP-binding proteins (MetN), two transmembrane proteins (MetI) and a solute-binding protein (MetQ).

It localises to the cell membrane. The catalysed reaction is L-methionine(out) + ATP + H2O = L-methionine(in) + ADP + phosphate + H(+). It carries out the reaction D-methionine(out) + ATP + H2O = D-methionine(in) + ADP + phosphate + H(+). Functionally, part of the ABC transporter complex MetNIQ involved in methionine import. Responsible for energy coupling to the transport system. In Leifsonia xyli subsp. xyli (strain CTCB07), this protein is Methionine import ATP-binding protein MetN.